The primary structure comprises 211 residues: Large ribosomal subunit protein uL4 (211 aa).

Disordered stretches follow at residues 1-28 (MAQA…ETEP) and 48-99 (TAST…GPRY). Residues 10 to 28 (RTGRRSEMELKGPRFETEP) are compositionally biased toward basic and acidic residues.

Belongs to the universal ribosomal protein uL4 family. In terms of assembly, part of the 50S ribosomal subunit.

One of the primary rRNA binding proteins, this protein initially binds near the 5'-end of the 23S rRNA. It is important during the early stages of 50S assembly. It makes multiple contacts with different domains of the 23S rRNA in the assembled 50S subunit and ribosome. In terms of biological role, forms part of the polypeptide exit tunnel. The sequence is that of Large ribosomal subunit protein uL4 from Rubrobacter xylanophilus (strain DSM 9941 / JCM 11954 / NBRC 16129 / PRD-1).